The chain runs to 303 residues: 1D-myo-inositol 2-acetamido-2-deoxy-alpha-D-glucopyranoside deacetylase (303 aa).

Histidine 15, aspartate 18, and histidine 157 together coordinate Zn(2+).

The protein belongs to the MshB deacetylase family. Zn(2+) is required as a cofactor.

The enzyme catalyses 1D-myo-inositol 2-acetamido-2-deoxy-alpha-D-glucopyranoside + H2O = 1D-myo-inositol 2-amino-2-deoxy-alpha-D-glucopyranoside + acetate. Its function is as follows. Catalyzes the deacetylation of 1D-myo-inositol 2-acetamido-2-deoxy-alpha-D-glucopyranoside (GlcNAc-Ins) in the mycothiol biosynthesis pathway. The protein is 1D-myo-inositol 2-acetamido-2-deoxy-alpha-D-glucopyranoside deacetylase of Kribbella flavida (strain DSM 17836 / JCM 10339 / NBRC 14399).